A 147-amino-acid chain; its full sequence is Cyanate hydratase (147 aa).

Residues arginine 88, glutamate 91, and serine 114 contribute to the active site.

The protein belongs to the cyanase family.

The enzyme catalyses cyanate + hydrogencarbonate + 3 H(+) = NH4(+) + 2 CO2. Catalyzes the reaction of cyanate with bicarbonate to produce ammonia and carbon dioxide. The sequence is that of Cyanate hydratase from Cupriavidus necator (strain ATCC 17699 / DSM 428 / KCTC 22496 / NCIMB 10442 / H16 / Stanier 337) (Ralstonia eutropha).